Here is a 412-residue protein sequence, read N- to C-terminus: Probable tRNA sulfurtransferase (412 aa).

The interval 1-22 (MPDIFTDNTDKQDSDPSRQGFE) is disordered. Positions 82 to 190 (PRAAEAAADV…QNLAYVYLET (109 aa)) constitute a THUMP domain. Residues 208 to 209 (LM), Lys-292, Gly-314, and Gln-323 contribute to the ATP site.

Belongs to the ThiI family.

It is found in the cytoplasm. It catalyses the reaction [ThiI sulfur-carrier protein]-S-sulfanyl-L-cysteine + a uridine in tRNA + 2 reduced [2Fe-2S]-[ferredoxin] + ATP + H(+) = [ThiI sulfur-carrier protein]-L-cysteine + a 4-thiouridine in tRNA + 2 oxidized [2Fe-2S]-[ferredoxin] + AMP + diphosphate. The catalysed reaction is [ThiS sulfur-carrier protein]-C-terminal Gly-Gly-AMP + S-sulfanyl-L-cysteinyl-[cysteine desulfurase] + AH2 = [ThiS sulfur-carrier protein]-C-terminal-Gly-aminoethanethioate + L-cysteinyl-[cysteine desulfurase] + A + AMP + 2 H(+). It participates in cofactor biosynthesis; thiamine diphosphate biosynthesis. Its function is as follows. Catalyzes the ATP-dependent transfer of a sulfur to tRNA to produce 4-thiouridine in position 8 of tRNAs, which functions as a near-UV photosensor. Also catalyzes the transfer of sulfur to the sulfur carrier protein ThiS, forming ThiS-thiocarboxylate. This is a step in the synthesis of thiazole, in the thiamine biosynthesis pathway. The sulfur is donated as persulfide by IscS. The protein is Probable tRNA sulfurtransferase of Methanosarcina acetivorans (strain ATCC 35395 / DSM 2834 / JCM 12185 / C2A).